The sequence spans 336 residues: TBC1 domain family member 21 (336 aa).

Residues glycine 57–lysine 265 enclose the Rab-GAP TBC domain.

As to quaternary structure, interacts with ACTB. Interacts with ARMC12, TOMM20, DNAH7 and RAP1A. Interacts with RAB10. As to expression, expressed in round and elongated spermatids (at protein level). Expressed specifically in adult testis and very weakly in fetal brain.

The protein resides in the cytoplasmic vesicle. Its subcellular location is the secretory vesicle. The protein localises to the acrosome. It is found in the cytoplasm. It localises to the cytoskeleton. In terms of biological role, acts as a GTPase-activating protein for Rab family protein(s). Essential for the establishment of male fertility, and is required for both the production of normal sperm number and sperm function. Plays an important role in the formation of intact mitochondria, outer dense fibers and axoneme within the sperm tail. Essential for sperm mitochondrial sheath formation and for the interactions of ARMC12 with VDAC2 and VDAC3. May be involved in acrosome formation and cytoskeletal reorganization during spermiogenesis, possibly by regulating RAB3A activity. This is TBC1 domain family member 21 (TBC1D21) from Homo sapiens (Human).